The sequence spans 420 residues: MIIVAHVLLILLGATEILQADLLPDEKISLLPPVNFTIKVTGLAQVLLQWKPNPDQEQRNVNLEYQVKINAPKEDDYETRITESKCVTILHKGFSASVRTILQNDHSLLASSWASAELHAPPGSPGTSIVNLTCTTNTTEDNYSRLRSYQVSLHCTWLVGTDAPEDTQYFLYYRYGSWTEECQEYSKDTLGRNIACWFPRTFILSKGRDWLAVLVNGSSKHSAIRPFDQLFALHAIDQINPPLNVTAEIEGTRLSIQWEKPVSAFPIHCFDYEVKIHNTRNGYLQIEKLMTNAFISIIDDLSKYDVQVRAAVSSMCREAGLWSEWSQPIYVGNDEHKPLREWFVIVIMATICFILLILSLICKICHLWIKLFPPIPAPKSNIKDLFVTTNYEKAGSSETEIEVICYIEKPGVETLEDSVF.

The signal sequence occupies residues 1-20 (MIIVAHVLLILLGATEILQA). Over 21–342 (DLLPDEKISL…NDEHKPLREW (322 aa)) the chain is Extracellular. The Fibronectin type-III 1 domain maps to 32-123 (PPVNFTIKVT…ASAELHAPPG (92 aa)). Asn-35 and Asn-131 each carry an N-linked (GlcNAc...) asparagine glycan. Cystine bridges form between Cys-134/Cys-155 and Cys-182/Cys-196. 2 N-linked (GlcNAc...) asparagine glycosylation sites follow: Asn-216 and Asn-244. The Fibronectin type-III 2 domain maps to 241–334 (PPLNVTAEIE…WSQPIYVGND (94 aa)). A disulfide bridge connects residues Cys-269 and Cys-316. The short motif at 322 to 326 (WSEWS) is the WSXWS motif element. A helical membrane pass occupies residues 343 to 362 (FVIVIMATICFILLILSLIC). The Cytoplasmic segment spans residues 363–420 (KICHLWIKLFPPIPAPKSNIKDLFVTTNYEKAGSSETEIEVICYIEKPGVETLEDSVF). A Box 1 motif motif is present at residues 371-379 (LFPPIPAPK).

The protein belongs to the type I cytokine receptor family. Type 5 subfamily. Interacts with IL5. Interacts with CSF2RB. Interacts with JAK2. Interacts with SDCBP. In terms of tissue distribution, expressed on eosinophils and basophils.

It localises to the membrane. In terms of biological role, cell surface receptor that plays an important role in the survival, differentiation, and chemotaxis of eosinophils. Acts by forming a heterodimeric receptor with CSF2RB subunit and subsequently binding to interleukin-5. In unstimulated conditions, interacts constitutively with JAK2. Heterodimeric receptor activation leads to JAK2 stimulation and subsequent activation of the JAK-STAT pathway. The chain is Interleukin-5 receptor subunit alpha (IL5RA) from Homo sapiens (Human).